We begin with the raw amino-acid sequence, 971 residues long: Oncostatin-M-specific receptor subunit beta (971 aa).

The N-terminal stretch at 1-23 (MAFSVVLHPAFLLAVLSLRASRS) is a signal peptide. At 24-737 (EVLEEPLPLT…VTTPDARSHM (714 aa)) the chain is on the extracellular side. Asn-74, Asn-97, Asn-130, Asn-162, and Asn-239 each carry an N-linked (GlcNAc...) asparagine glycan. The cysteines at positions 242 and 252 are disulfide-linked. Residues Asn-271, Asn-304, Asn-323, and Asn-377 are each glycosylated (N-linked (GlcNAc...) asparagine). Fibronectin type-III domains follow at residues 332-425 (APQD…TPET), 427-523 (PSQA…SNDS), 524-620 (GHEE…TQEL), and 622-733 (PLVN…TPDA). The short motif at 412 to 416 (WSDWT) is the WSXWS motif element. N-linked (GlcNAc...) asparagine glycans are attached at residues Asn-491, Asn-541, Asn-577, Asn-689, and Asn-722. Residues 738 to 758 (LLQIILPMTLCVLLSIIVCYW) form a helical membrane-spanning segment. At 759–971 (KSQWVKEKCY…STVLLGQGEQ (213 aa)) the chain is on the cytoplasmic side. Positions 767 to 775 (CYPDIPNPY) match the Box 1 motif motif. A disordered region spans residues 949 to 971 (LASPSLKEDNSLTSTVLLGQGEQ). The span at 959–971 (SLTSTVLLGQGEQ) shows a compositional bias: polar residues.

The protein belongs to the type I cytokine receptor family. Type 2 subfamily. As to quaternary structure, heterodimer composed of OSMR and IL6ST (type II OSM receptor). Heterodimer with IL31RA to form the IL31 receptor. In terms of tissue distribution, widely expressed. Expressed at highest levels in the lung, heart, thymus and spleen. Expressed in dorsal root ganglia.

The protein localises to the membrane. Functionally, associates with IL31RA to form the IL31 receptor. Binds IL31 to activate STAT3 and possibly STAT1 and STAT5. Capable of transducing OSM-specific signaling events. The polypeptide is Oncostatin-M-specific receptor subunit beta (Osmr) (Mus musculus (Mouse)).